The chain runs to 945 residues: Isoleucine--tRNA ligase (945 aa).

The 'HIGH' region motif lies at 66-76 (PYANGDIHLGH). Glutamate 581 lines the L-isoleucyl-5'-AMP pocket. A 'KMSKS' region motif is present at residues 622 to 626 (KMSKS). Residue lysine 625 coordinates ATP. The Zn(2+) site is built by cysteine 908, cysteine 911, cysteine 928, and cysteine 931.

Belongs to the class-I aminoacyl-tRNA synthetase family. IleS type 1 subfamily. Monomer. The cofactor is Zn(2+).

The protein resides in the cytoplasm. The catalysed reaction is tRNA(Ile) + L-isoleucine + ATP = L-isoleucyl-tRNA(Ile) + AMP + diphosphate. Its function is as follows. Catalyzes the attachment of isoleucine to tRNA(Ile). As IleRS can inadvertently accommodate and process structurally similar amino acids such as valine, to avoid such errors it has two additional distinct tRNA(Ile)-dependent editing activities. One activity is designated as 'pretransfer' editing and involves the hydrolysis of activated Val-AMP. The other activity is designated 'posttransfer' editing and involves deacylation of mischarged Val-tRNA(Ile). In Burkholderia cenocepacia (strain HI2424), this protein is Isoleucine--tRNA ligase.